Reading from the N-terminus, the 94-residue chain is Co-chaperonin GroES (94 aa).

The protein belongs to the GroES chaperonin family. In terms of assembly, heptamer of 7 subunits arranged in a ring. Interacts with the chaperonin GroEL.

The protein localises to the cytoplasm. Together with the chaperonin GroEL, plays an essential role in assisting protein folding. The GroEL-GroES system forms a nano-cage that allows encapsulation of the non-native substrate proteins and provides a physical environment optimized to promote and accelerate protein folding. GroES binds to the apical surface of the GroEL ring, thereby capping the opening of the GroEL channel. The protein is Co-chaperonin GroES of Streptococcus equinus (Streptococcus bovis).